A 155-amino-acid chain; its full sequence is Cardio acceleratory peptide 2b (155 aa).

The first 26 residues, 1–26 (MKAIFSLYNIVSAILLLVLLAEFSTA), serve as a signal peptide directing secretion. The propeptide occupies 27–33 (ELNHDKN). The residue at position 47 (V47) is a Valine amide. The propeptide occupies 50 to 85 (SDPSLANSLRDASDAAVFDGLYGDASQEDYNEADYQ). At V96 the chain carries Valine amide. A propeptide spanning residues 99–117 (SDAELRKFAHLLALQQVLD) is cleaved from the precursor. The residue at position 134 (L134) is a Leucine amide. Positions 138–155 (SVDAKAFSDASKGQQEFN) are excised as a propeptide.

This sequence belongs to the pyrokinin family.

The protein localises to the secreted. Its function is as follows. CAP-1 and CAP-2, but not CAP-3 are ligands for the Capa receptor. CAP-1 and CAP-2 are probably components of the signal transduction pathway that leads to Malpighian tubule fluid secretion via the second messenger nitric oxide. The protein is Cardio acceleratory peptide 2b of Drosophila pseudoobscura pseudoobscura (Fruit fly).